The sequence spans 434 residues: GTPase Der (434 aa).

2 EngA-type G domains span residues 3 to 167 (NIVA…PEIE) and 175 to 350 (PRFA…ESRS). GTP-binding positions include 9–16 (GRPNVGKS), 56–60 (DTGGY), 119–122 (NKVD), 181–188 (GRPNAGKS), 228–232 (DTAGI), and 293–296 (NKWD). One can recognise a KH-like domain in the interval 351 to 434 (KKIKTRQFND…VPISIFFRKK (84 aa)).

The protein belongs to the TRAFAC class TrmE-Era-EngA-EngB-Septin-like GTPase superfamily. EngA (Der) GTPase family. Associates with the 50S ribosomal subunit.

GTPase that plays an essential role in the late steps of ribosome biogenesis. This chain is GTPase Der, found in Christiangramia forsetii (strain DSM 17595 / CGMCC 1.15422 / KT0803) (Gramella forsetii).